The chain runs to 161 residues: Allophycocyanin subunit alpha-B (161 aa).

The residue at position 71 (asparagine 71) is an N4-methylasparagine. Residue cysteine 81 coordinates (2R,3E)-phycocyanobilin.

This sequence belongs to the phycobiliprotein family. In terms of assembly, heterodimer of an alpha-B and a beta chain forming AP-B. Post-translationally, contains one covalently linked bilin chromophore. The chromophore is added by phycocyanobilin lyase CpcUS.

It localises to the cellular thylakoid membrane. In terms of biological role, a variant alpha-allophycocyanin (AP) which forms a complex with beta-AP with maximum absorption at approximately 670 nanometers. It is an important phycobilisome terminal emitter involved in energy transfer to photosystem I. This is Allophycocyanin subunit alpha-B (apcD) from Picosynechococcus sp. (strain ATCC 27264 / PCC 7002 / PR-6) (Agmenellum quadruplicatum).